The primary structure comprises 426 residues: D-tagatose-1,6-bisphosphate aldolase subunit KbaZ (426 aa).

The protein belongs to the GatZ/KbaZ family. KbaZ subfamily. As to quaternary structure, forms a complex with KbaY.

It participates in carbohydrate metabolism; D-tagatose 6-phosphate degradation; D-glyceraldehyde 3-phosphate and glycerone phosphate from D-tagatose 6-phosphate: step 2/2. Component of the tagatose-1,6-bisphosphate aldolase KbaYZ that is required for full activity and stability of the Y subunit. Could have a chaperone-like function for the proper and stable folding of KbaY. When expressed alone, KbaZ does not show any aldolase activity. This chain is D-tagatose-1,6-bisphosphate aldolase subunit KbaZ, found in Escherichia coli O81 (strain ED1a).